A 370-amino-acid polypeptide reads, in one-letter code: MKPTRVPKNPCFSSGPCAKHPGYSIEDLNDAPFGRSHRSKPGKEKLAEAIKRTRDMLGLPSDYLVGIVPASDTGAFEMCLWSMLGCRGVDVLVWESFSKEWATDITKQLKLKDTRVFEAEYGKLPDLENVDFKNDVVFVWNGTTSGVKVPNGDWIPDSREGLTLCDATSAVFAMDIPYHKLDVLTFSWQKVLGGEGAHGMLILSPRAVQRLESYTPAWPLPKIFRLTKGGKLNKEIFEGSTINTPSMLANEDWLATLKWAESVGGLKQLIQRTNENLAVFEAFVAKNNWIHFLAETKEIRSSTSVCFKVDLSEEKLKELIKMLENEKVAYDIGSYRDAPSGLRIWCGATIEKEDLECLCEWIEWAYDLVK.

Residue arginine 38 coordinates L-glutamate. Tryptophan 101, threonine 143, aspartate 166, and glutamine 189 together coordinate pyridoxal 5'-phosphate. An N6-(pyridoxal phosphate)lysine modification is found at lysine 190. 243–244 (NT) contributes to the pyridoxal 5'-phosphate binding site.

It belongs to the class-V pyridoxal-phosphate-dependent aminotransferase family. SerC subfamily. As to quaternary structure, homodimer. The cofactor is pyridoxal 5'-phosphate.

Its subcellular location is the cytoplasm. It carries out the reaction O-phospho-L-serine + 2-oxoglutarate = 3-phosphooxypyruvate + L-glutamate. The catalysed reaction is 4-(phosphooxy)-L-threonine + 2-oxoglutarate = (R)-3-hydroxy-2-oxo-4-phosphooxybutanoate + L-glutamate. It participates in amino-acid biosynthesis; L-serine biosynthesis; L-serine from 3-phospho-D-glycerate: step 2/3. The protein operates within cofactor biosynthesis; pyridoxine 5'-phosphate biosynthesis; pyridoxine 5'-phosphate from D-erythrose 4-phosphate: step 3/5. Catalyzes the reversible conversion of 3-phosphohydroxypyruvate to phosphoserine and of 3-hydroxy-2-oxo-4-phosphonooxybutanoate to phosphohydroxythreonine. This chain is Phosphoserine aminotransferase, found in Methanosarcina mazei (strain ATCC BAA-159 / DSM 3647 / Goe1 / Go1 / JCM 11833 / OCM 88) (Methanosarcina frisia).